The chain runs to 133 residues: Helix-loop-helix protein 1 (133 aa).

Positions 1 to 78 (MMLNSDTMEL…RRRATAKYRT (78 aa)) are disordered. Residues 25–39 (DCGGGPGPDGAGSGD) are compositionally biased toward gly residues. Residues 52–65 (ESGRKDLQHLSREE) are compositionally biased toward basic and acidic residues. Over residues 66–78 (RRRRRRATAKYRT) the composition is skewed to basic residues. Residues 75–127 (KYRTAHATRERIRVEAFNLAFAELRKLLPTLPPDKKLSKIEILRLAICYISYL) enclose the bHLH domain.

As to quaternary structure, efficient DNA binding requires dimerization with another bHLH protein.

It localises to the nucleus. Its function is as follows. May serve as DNA-binding protein and may be involved in the control of cell-type determination, possibly within the developing nervous system. This chain is Helix-loop-helix protein 1 (Nhlh1), found in Mus musculus (Mouse).